The following is a 234-amino-acid chain: UPF0173 metal-dependent hydrolase RHECIAT_CH0001941 (234 aa).

Belongs to the UPF0173 family.

The polypeptide is UPF0173 metal-dependent hydrolase RHECIAT_CH0001941 (Rhizobium etli (strain CIAT 652)).